Here is a 328-residue protein sequence, read N- to C-terminus: GGQPLQNKVQLKGRDLLTLKNFTGEEIKYILWLSADLKFRIKQKGEYLPLLQGKSLGMIFEKRSTRTRLSTETGFALLGGHPCFLTTQDIHLGVNESLKDTARVLSSMTDAVLARVYKQSDLDILAQEASIPIINGLSDLYHPIQILADYLTLQEHYGALKGLTLSWIGDGNNILHSIMMSAAKFGMHLQVATPKGYEPDPSITKLAEQYAKENGTNVSLTNDPLEAARGGNVLITDTWISMGQEEEKKKRLQAFQGYQVTMKTAEVAASDWTFLHCLPRKPEEVDDEVFYSPQSLVFPEAENRKWTIMAVMVSLLTDYSPQLQKPKF.

The N-terminal 6 residues, 1-6 (GGQPLQ), are a transit peptide targeting the mitochondrion. Position 44 is an N6-acetyllysine; alternate (K44). An N6-succinyllysine; alternate modification is found at K44. The residue at position 54 (K54) is an N6-succinyllysine. The residue at position 62 (K62) is an N6-acetyllysine; alternate. At K62 the chain carries N6-succinyllysine; alternate. A carbamoyl phosphate-binding site is contributed by 64 to 68 (STRTR). S107 is subject to Phosphoserine. A carbamoyl phosphate-binding site is contributed by R115. Residue R115 coordinates L-ornithine. N6-acetyllysine; alternate is present on K118. An N6-succinyllysine; alternate modification is found at K118. Carbamoyl phosphate is bound at residue H142. N173 provides a ligand contact to L-ornithine. K195, K205, and K212 each carry N6-acetyllysine; alternate. 3 positions are modified to N6-succinyllysine; alternate: K195, K205, and K212. An L-ornithine-binding site is contributed by 237 to 241 (DTWIS). N6-succinyllysine is present on residues K248 and K263. 276–279 (HCLP) provides a ligand contact to L-ornithine. Residue C277 is part of the active site. N6-acetyllysine; alternate is present on K281. N6-succinyllysine; alternate is present on K281. R304 serves as a coordination point for carbamoyl phosphate. R304 lines the L-ornithine pocket.

It belongs to the aspartate/ornithine carbamoyltransferase superfamily. OTCase family. In terms of assembly, homotrimer. Acetylation at Lys-62 negatively regulates ornithine carbamoyltransferase activity in response to nutrient signals.

The protein localises to the mitochondrion matrix. It carries out the reaction carbamoyl phosphate + L-ornithine = L-citrulline + phosphate + H(+). Its pathway is nitrogen metabolism; urea cycle; L-citrulline from L-ornithine and carbamoyl phosphate: step 1/1. With respect to regulation, negatively regulated by lysine acetylation. Catalyzes the second step of the urea cycle, the condensation of carbamoyl phosphate with L-ornithine to form L-citrulline. The urea cycle ensures the detoxification of ammonia by converting it to urea for excretion. This Sus scrofa (Pig) protein is Ornithine transcarbamylase, mitochondrial.